Here is a 527-residue protein sequence, read N- to C-terminus: UvrABC system protein C (527 aa).

In terms of domain architecture, GIY-YIG spans 9–87; it reads KNPGCYIYKN…IKKYSPKYNI (79 aa). Positions 191 to 226 constitute a UVR domain; that stretch reads DSLIHELKNEMNEKSKNLQFEEALLIREEINAIERL.

The protein belongs to the UvrC family. As to quaternary structure, interacts with UvrB in an incision complex.

It is found in the cytoplasm. Its function is as follows. The UvrABC repair system catalyzes the recognition and processing of DNA lesions. UvrC both incises the 5' and 3' sides of the lesion. The N-terminal half is responsible for the 3' incision and the C-terminal half is responsible for the 5' incision. In Methanococcus maripaludis (strain DSM 14266 / JCM 13030 / NBRC 101832 / S2 / LL), this protein is UvrABC system protein C.